The chain runs to 510 residues: Myosin-binding protein C, cardiac-type (510 aa).

3 consecutive Ig-like C2-type domains span residues 177-269, 270-347, and 378-438; these read KKST…VKEP, PYSS…TVKT, and RDQA…SFIP.

This sequence belongs to the immunoglobulin superfamily. MyBP family. As to expression, heart.

Its function is as follows. Thick filament-associated protein located in the crossbridge region of vertebrate striated muscle a bands. In vitro it binds MHC, F-actin and native thin filaments, and modifies the activity of actin-activated myosin ATPase. It may modulate muscle contraction or may play a more structural role. In Ambystoma mexicanum (Axolotl), this protein is Myosin-binding protein C, cardiac-type.